A 477-amino-acid chain; its full sequence is Myc-associated zinc finger protein (477 aa).

2 disordered regions span residues 59–78 and 121–146; these read AQSP…APAA and TVDT…PAAE. Over residues 130 to 141 the composition is skewed to pro residues; sequence PPAPPPPPPPVS. 4 C2H2-type zinc fingers span residues 190–212, 279–301, 307–329, and 337–360; these read YICA…EAIH, HACE…KLSH, YQCP…VRSH, and YNCS…RQVH. Ser-361 carries the phosphoserine modification. A C2H2-type 5 zinc finger spans residues 366–388; that stretch reads FKCEKCEAAFATKDRLRAHTVRH. The segment at 392-413 adopts a C2H2-type 6; atypical zinc-finger fold; the sequence is VPCHVCGKMLSSAYISDHMKVH.

Interacts with BPTF. As to quaternary structure, forms a heterodimer with MAZ isoform 2; the interaction inhibits MAZ isoform 1-mediated transcription activation. In terms of assembly, forms a heterodimer with MAZ isoform 1; the interaction inhibits MAZ isoform 1-mediated transcription activation. In terms of tissue distribution, present in kidney, liver and brain. In the brain, highest levels are found in motor cortex and midfrontal cortex (at protein level). As to expression, expressed in the heart, brain, placenta, lung, liver, skeletal muscle and weakly expressed in the kidney. Expressed in the joint synovium.

Its subcellular location is the nucleus. Functionally, transcriptional regulator, potentially with dual roles in transcription initiation and termination. Binds DNA and functions as a transcriptional activator. Binds to two G/A-rich sites, ME1a1 and ME1a2, within the MYC promoter having greater affinity for the former. Also binds to multiple G/C-rich sites within the promoter of the Sp1 family of transcription factors. Its function is as follows. Binds DNA and functions as a transcriptional activator. Inhibits MAZ isoform 1-mediated transcription. In terms of biological role, binds DNA and functions as a transcriptional activator. The chain is Myc-associated zinc finger protein (MAZ) from Homo sapiens (Human).